Reading from the N-terminus, the 129-residue chain is MAKQPTRARKRVRKQVADGVAHIHASFNNTIVTITDRQGNALAWATAGGSGFRGSRKSTPFAAQVAAERCGEMAKEYGLKNLEVMVKGPGPGRESTVRALNAAGFRITNIVDATPIPHNGCRPPKKRRV.

The protein belongs to the universal ribosomal protein uS11 family. Part of the 30S ribosomal subunit. Interacts with proteins S7 and S18. Binds to IF-3.

In terms of biological role, located on the platform of the 30S subunit, it bridges several disparate RNA helices of the 16S rRNA. Forms part of the Shine-Dalgarno cleft in the 70S ribosome. The polypeptide is Small ribosomal subunit protein uS11 (Vibrio atlanticus (strain LGP32) (Vibrio splendidus (strain Mel32))).